The following is a 257-amino-acid chain: Large ribosomal subunit protein uL2 (257 aa).

A disordered region spans residues 207–226 (VEHPFGGGNHQHIGKPSTIR).

It belongs to the universal ribosomal protein uL2 family. As to quaternary structure, component of the large ribosomal subunit.

It localises to the cytoplasm. Its function is as follows. Component of the large ribosomal subunit. The ribosome is a large ribonucleoprotein complex responsible for the synthesis of proteins in the cell. This Ictalurus punctatus (Channel catfish) protein is Large ribosomal subunit protein uL2 (rpl8).